Consider the following 571-residue polypeptide: MRYTDYLLPTLKETPSDAEVISHKLMLRAGMIRKLAAGIYNYLPFGLRSIRKVEQIVREEMDRAGAMELLMPMVVPSELWEESGRWEHYGKELLRFTDRKDASFCLGPTHEEVITDLVRNTVRSYRQLPLNLYQIQGKFRDEIRPRFGLMRGREFIMKDAYSFDIDEAGADVAYEKMYQAYRRIFERCGLKFRAVEADTGNIGGSSSHEFMVLAASGEDAIVSCGQCEYAANIEKAEVALTASDTPVAAAELARVDTPGCKSIEEVAAFLKVDKERLVKTLIVQTDAGETLAVLLRGNHELNDIKLCRLLGCNEITLAPDDVVGKVTGAAPGFAGPVDLSLRVLADFAVQGMADFVTGANAADTHYVGVNLERDFTVEQFADLRAAEAGDICPRCGGVLEIWRGIEVGHVFKLGTKYSAALGATVLDDQGQDRELFMGCYGIGVGRTVAAAIEQNHDENGIVFPMPIAPFHVLVTVVNPRQEEVLAAAENLYAELQALGVEVLLDDRDERPGSKFKDADLIGIPLRLTVGARGLKENAVELQERAGGERRMLPLAEAAALVRDMVVEACGR.

This sequence belongs to the class-II aminoacyl-tRNA synthetase family. ProS type 1 subfamily. As to quaternary structure, homodimer.

The protein localises to the cytoplasm. It catalyses the reaction tRNA(Pro) + L-proline + ATP = L-prolyl-tRNA(Pro) + AMP + diphosphate. In terms of biological role, catalyzes the attachment of proline to tRNA(Pro) in a two-step reaction: proline is first activated by ATP to form Pro-AMP and then transferred to the acceptor end of tRNA(Pro). As ProRS can inadvertently accommodate and process non-cognate amino acids such as alanine and cysteine, to avoid such errors it has two additional distinct editing activities against alanine. One activity is designated as 'pretransfer' editing and involves the tRNA(Pro)-independent hydrolysis of activated Ala-AMP. The other activity is designated 'posttransfer' editing and involves deacylation of mischarged Ala-tRNA(Pro). The misacylated Cys-tRNA(Pro) is not edited by ProRS. The protein is Proline--tRNA ligase of Syntrophotalea carbinolica (strain DSM 2380 / NBRC 103641 / GraBd1) (Pelobacter carbinolicus).